The primary structure comprises 129 residues: Large ribosomal subunit protein eL31 (129 aa).

The segment at 1-46 (MSQETTATKQEEQKTSELQQQKKEEQKPQQATTTTKEEKKTKPEKE) is disordered. Composition is skewed to basic and acidic residues over residues 9–27 (KQEE…EEQK) and 35–46 (TKEEKKTKPEKE).

The protein belongs to the eukaryotic ribosomal protein eL31 family.

In Sulfolobus acidocaldarius (strain ATCC 33909 / DSM 639 / JCM 8929 / NBRC 15157 / NCIMB 11770), this protein is Large ribosomal subunit protein eL31 (rpl31e).